Reading from the N-terminus, the 716-residue chain is Translation initiation factor IF-2 (716 aa).

A disordered region spans residues 53 to 135 (GGAGVTSQKP…PLKPKKELPE (83 aa)). The segment covering 57–83 (VTSQKPAETNKNKPQGINQQPAGNQPN) has biased composition (polar residues). Residues 93–109 (VQNNQFNKNKKNNNNNK) are compositionally biased toward low complexity. Positions 217-386 (IRPPVVTIMG…LLVSEVEELK (170 aa)) constitute a tr-type G domain. Positions 226-233 (GHVDHGKT) are G1. 226 to 233 (GHVDHGKT) lines the GTP pocket. Residues 251-255 (GITQH) are G2. Residues 272 to 275 (DTPG) are G3. GTP is bound by residues 272–276 (DTPGH) and 326–329 (NKVD). The tract at residues 326 to 329 (NKVD) is G4. Residues 362 to 364 (SAL) are G5.

This sequence belongs to the TRAFAC class translation factor GTPase superfamily. Classic translation factor GTPase family. IF-2 subfamily.

The protein resides in the cytoplasm. One of the essential components for the initiation of protein synthesis. Protects formylmethionyl-tRNA from spontaneous hydrolysis and promotes its binding to the 30S ribosomal subunits. Also involved in the hydrolysis of GTP during the formation of the 70S ribosomal complex. The sequence is that of Translation initiation factor IF-2 from Bacillus velezensis (strain DSM 23117 / BGSC 10A6 / LMG 26770 / FZB42) (Bacillus amyloliquefaciens subsp. plantarum).